Here is a 403-residue protein sequence, read N- to C-terminus: Arginine biosynthesis bifunctional protein ArgJ (403 aa).

The substrate site is built by T151, K177, T188, E275, N398, and S403. Catalysis depends on T188, which acts as the Nucleophile.

It belongs to the ArgJ family. In terms of assembly, heterotetramer of two alpha and two beta chains.

It localises to the cytoplasm. It catalyses the reaction N(2)-acetyl-L-ornithine + L-glutamate = N-acetyl-L-glutamate + L-ornithine. The catalysed reaction is L-glutamate + acetyl-CoA = N-acetyl-L-glutamate + CoA + H(+). It participates in amino-acid biosynthesis; L-arginine biosynthesis; L-ornithine and N-acetyl-L-glutamate from L-glutamate and N(2)-acetyl-L-ornithine (cyclic): step 1/1. The protein operates within amino-acid biosynthesis; L-arginine biosynthesis; N(2)-acetyl-L-ornithine from L-glutamate: step 1/4. Catalyzes two activities which are involved in the cyclic version of arginine biosynthesis: the synthesis of N-acetylglutamate from glutamate and acetyl-CoA as the acetyl donor, and of ornithine by transacetylation between N(2)-acetylornithine and glutamate. In Caulobacter vibrioides (strain ATCC 19089 / CIP 103742 / CB 15) (Caulobacter crescentus), this protein is Arginine biosynthesis bifunctional protein ArgJ.